Consider the following 491-residue polypeptide: Serine/threonine-protein phosphatase 2A regulatory subunit B'' subunit delta (491 aa).

One can recognise an EF-hand domain in the interval 331–366; that stretch reads TTPTSTEYWFRCMDLDGDGALSMFELEFFYEEQAQR. Ca(2+)-binding residues include Asp-344, Asp-346, Asp-348, and Glu-355. 2 stretches are compositionally biased toward acidic residues: residues 460-473 and 481-491; these read AMAE…EGSD and ADEDCDDLEPL. Residues 460-491 are disordered; the sequence is AMAEDDDDHDEGSDPIDLYGLADEDCDDLEPL.

PP2A consists of a common heterodimeric core enzyme, composed of a 36 kDa catalytic subunit (subunit C) and a 65 kDa constant regulatory subunit (PR65 or subunit A), that associates with a variety of regulatory subunits. Proteins that associate with the core dimer include three families of regulatory subunits B (the R2/B/PR55/B55, R3/B''/PR72/PR130/PR59 and R5/B'/B56 families), the 48 kDa variable regulatory subunit, viral proteins, and cell signaling molecules. In terms of tissue distribution, expressed in testis, kidney, liver, lung, spleen, brain and heart.

The B regulatory subunit might modulate substrate selectivity and catalytic activity, and might also direct the localization of the catalytic enzyme to a particular subcellular compartment. Interacts with retinoblastoma-related protein p107 (in vivo). May target PP2A core dimer to p107 resulting in dephosphorylation of p107. This is Serine/threonine-protein phosphatase 2A regulatory subunit B'' subunit delta (Ppp2r3d) from Mus musculus (Mouse).